The primary structure comprises 601 residues: Elongation factor 4 (601 aa).

Residues 7 to 189 (DTIRNFSIVA…AIVAKLPPPK (183 aa)) enclose the tr-type G domain. GTP is bound by residues 19–24 (DHGKST) and 136–139 (NKID).

It belongs to the TRAFAC class translation factor GTPase superfamily. Classic translation factor GTPase family. LepA subfamily.

It is found in the cell inner membrane. It catalyses the reaction GTP + H2O = GDP + phosphate + H(+). Required for accurate and efficient protein synthesis under certain stress conditions. May act as a fidelity factor of the translation reaction, by catalyzing a one-codon backward translocation of tRNAs on improperly translocated ribosomes. Back-translocation proceeds from a post-translocation (POST) complex to a pre-translocation (PRE) complex, thus giving elongation factor G a second chance to translocate the tRNAs correctly. Binds to ribosomes in a GTP-dependent manner. This is Elongation factor 4 from Methylobacterium nodulans (strain LMG 21967 / CNCM I-2342 / ORS 2060).